The sequence spans 212 residues: Octanoyltransferase (212 aa).

The BPL/LPL catalytic domain maps to 31 to 209 (AETQDEIWLV…HFANLLGYNI (179 aa)). Substrate-binding positions include 70–77 (RGGQITYH), 138–140 (SLG), and 151–153 (GLA). The active-site Acyl-thioester intermediate is the Cys-169.

Belongs to the LipB family.

The protein resides in the cytoplasm. The catalysed reaction is octanoyl-[ACP] + L-lysyl-[protein] = N(6)-octanoyl-L-lysyl-[protein] + holo-[ACP] + H(+). Its pathway is protein modification; protein lipoylation via endogenous pathway; protein N(6)-(lipoyl)lysine from octanoyl-[acyl-carrier-protein]: step 1/2. Catalyzes the transfer of endogenously produced octanoic acid from octanoyl-acyl-carrier-protein onto the lipoyl domains of lipoate-dependent enzymes. Lipoyl-ACP can also act as a substrate although octanoyl-ACP is likely to be the physiological substrate. The sequence is that of Octanoyltransferase from Haemophilus influenzae (strain ATCC 51907 / DSM 11121 / KW20 / Rd).